Here is an 85-residue protein sequence, read N- to C-terminus: MKVTLIAILTCAAVLVLHTTAAEELEAESQLMEVGMPDTELAAVDEERLFECSVSCEIEKEGNEDCKKKKCKGGWKCKFNMCVKV.

The signal sequence occupies residues 1–22 (MKVTLIAILTCAAVLVLHTTAA). Positions 23-48 (EELEAESQLMEVGMPDTELAAVDEER) are excised as a propeptide. Disulfide bonds link C52–C66, C56–C77, and C71–C82.

Belongs to the neurotoxin 12 (Hwtx-2) family. 02 (Hwtx-2) subfamily. Expressed by the venom gland.

The protein localises to the secreted. Functionally, postsynaptic neurotoxin. This chain is U4-theraphotoxin-Hhn1t, found in Cyriopagopus hainanus (Chinese bird spider).